Reading from the N-terminus, the 347-residue chain is NADH-ubiquinone oxidoreductase chain 2 (347 aa).

The next 11 helical transmembrane spans lie at 3-23 (PIIF…VMIS), 25-45 (HWLR…PIMM), 66-86 (ASML…QWTV), 96-116 (MLMT…FWVP), 122-142 (IPLS…MSVL), 145-165 (ILPS…IMIG), 178-198 (IMAY…PYNP), 200-220 (MMLL…LLFM), 237-257 (MPIM…LPPL), 274-294 (NSII…YFYM), and 325-345 (LLPT…ILSI).

This sequence belongs to the complex I subunit 2 family. In terms of assembly, core subunit of respiratory chain NADH dehydrogenase (Complex I) which is composed of 45 different subunits. Interacts with TMEM242.

The protein resides in the mitochondrion inner membrane. The catalysed reaction is a ubiquinone + NADH + 5 H(+)(in) = a ubiquinol + NAD(+) + 4 H(+)(out). Functionally, core subunit of the mitochondrial membrane respiratory chain NADH dehydrogenase (Complex I) which catalyzes electron transfer from NADH through the respiratory chain, using ubiquinone as an electron acceptor. Essential for the catalytic activity and assembly of complex I. This is NADH-ubiquinone oxidoreductase chain 2 from Capra hircus (Goat).